A 107-amino-acid chain; its full sequence is Integration host factor subunit beta (107 aa).

Residues 76-107 are disordered; the sequence is FVPHFKPGKELRERVDGRAGEPLKADDPDDDR. The span at 82–101 shows a compositional bias: basic and acidic residues; it reads PGKELRERVDGRAGEPLKAD.

The protein belongs to the bacterial histone-like protein family. Heterodimer of an alpha and a beta chain.

Its function is as follows. This protein is one of the two subunits of integration host factor, a specific DNA-binding protein that functions in genetic recombination as well as in transcriptional and translational control. The polypeptide is Integration host factor subunit beta (Burkholderia cenocepacia (strain HI2424)).